The primary structure comprises 207 residues: Large ribosomal subunit protein uL4 (207 aa).

A disordered region spans residues R45–I78.

The protein belongs to the universal ribosomal protein uL4 family. As to quaternary structure, part of the 50S ribosomal subunit.

Functionally, one of the primary rRNA binding proteins, this protein initially binds near the 5'-end of the 23S rRNA. It is important during the early stages of 50S assembly. It makes multiple contacts with different domains of the 23S rRNA in the assembled 50S subunit and ribosome. In terms of biological role, forms part of the polypeptide exit tunnel. This is Large ribosomal subunit protein uL4 from Lacticaseibacillus paracasei (strain ATCC 334 / BCRC 17002 / CCUG 31169 / CIP 107868 / KCTC 3260 / NRRL B-441) (Lactobacillus paracasei).